A 460-amino-acid polypeptide reads, in one-letter code: MSIDIKFTINDILFNQESLQKKNKYTCPICFEFIYKKQIYQCKSGHHACKECWEKSLETKKECMTCKSVVNSYNDLSRCLMVERAFDKKECCCIYSFTEQIVQGGTNCSPPDGASDQNQRKLIKDEENGCKEKIEVDQIDSHLINCQYKFVTCSFKGCEKILRMNSLESHQNECGFKLVICDFCKRDDIKKKELETHYKTCPMVPIDCSQGCSVKIERKSIIDHIENDCCNTQIPCKYFEQGCKVEMKRSELQNHLERVNHQTYMGILIDKLTNQVGHSKKTHDELLKKIEDLSLLIIKFSDACLKKQVLPKALDICSNGYRNKWIISNYSSLAKSKLNCKSLSSPILLILSHHFQVCVYPKGDENKEYISLYLRVNNIEEPNSLKVEYSFTLVNVLDKSKSITKRVDKIVFISPKEWGWGKFLLSDLINKENGWLSNDDKLTIEIYIKILNEEYEPLES.

The RING-type; degenerate zinc finger occupies 27–67 (CPICFEFIYKKQIYQCKSGHHACKECWEKSLETKKECMTCK). TRAF-type zinc fingers lie at residues 141–194 (SHLI…KKEL) and 196–253 (THYK…SELQ). The MATH domain maps to 320 to 448 (GYRNKWIISN…DDKLTIEIYI (129 aa)).

Belongs to the TNF receptor-associated factor family. A subfamily.

It localises to the cytoplasm. Functionally, probable adapter protein and signal transducer that links members of the tumor necrosis factor receptor family to different signaling pathways by association with the receptor cytoplasmic domain and kinases. The sequence is that of TNF receptor-associated factor family protein DDB_G0290883 from Dictyostelium discoideum (Social amoeba).